Consider the following 325-residue polypeptide: Tartrate-resistant acid phosphatase type 5 (325 aa).

An N-terminal signal peptide occupies residues Met-1–Gly-21. Asn-116 and Asn-147 each carry an N-linked (GlcNAc...) asparagine glycan.

As to quaternary structure, exists either as monomer or, after proteolytic processing, as a dimer of two chains linked by disulfide bond(s). Fe cation serves as cofactor.

It localises to the lysosome. It carries out the reaction a phosphate monoester + H2O = an alcohol + phosphate. This Oryctolagus cuniculus (Rabbit) protein is Tartrate-resistant acid phosphatase type 5 (ACP5).